Reading from the N-terminus, the 262-residue chain is MTRIHPTAIVEPGAQIDESVEIGPYAIVGPHVTIGARTTIGSHSVIEGHTTLGEDNRIGHYASVGGRPQDMKYKDEPTKLVIGNRNTIREFTTIHTGTVQDVGVTTLGDDNWIMAYVHIGHDCTVGNHVILSSNAQMAGHVEIGDWAIVGGMSGVHQFVRIGAHSMLGGASALVQDIPPFVIAAGNKAEPHGINVEGLRRRGFSPDAISALRSAYRLLYKNGLSFEEAKVQLRELAAAGGEGDAAVKTLVEFIDASQRGIIR.

The protein belongs to the transferase hexapeptide repeat family. LpxA subfamily. Homotrimer.

Its subcellular location is the cytoplasm. The enzyme catalyses a (3R)-hydroxyacyl-[ACP] + UDP-N-acetyl-alpha-D-glucosamine = a UDP-3-O-[(3R)-3-hydroxyacyl]-N-acetyl-alpha-D-glucosamine + holo-[ACP]. The protein operates within glycolipid biosynthesis; lipid IV(A) biosynthesis; lipid IV(A) from (3R)-3-hydroxytetradecanoyl-[acyl-carrier-protein] and UDP-N-acetyl-alpha-D-glucosamine: step 1/6. Involved in the biosynthesis of lipid A, a phosphorylated glycolipid that anchors the lipopolysaccharide to the outer membrane of the cell. The protein is Acyl-[acyl-carrier-protein]--UDP-N-acetylglucosamine O-acyltransferase of Burkholderia lata (strain ATCC 17760 / DSM 23089 / LMG 22485 / NCIMB 9086 / R18194 / 383).